We begin with the raw amino-acid sequence, 521 residues long: 2-isopropylmalate synthase (521 aa).

Residues 5-267 (VIIFDTTLRD…HTNIKHQEIH (263 aa)) enclose the Pyruvate carboxyltransferase domain. Residues Asp14, His202, His204, and Asn238 each contribute to the Mn(2+) site. The interval 392–521 (KLNYLSVQSG…FAQKTVMETL (130 aa)) is regulatory domain.

It belongs to the alpha-IPM synthase/homocitrate synthase family. LeuA type 1 subfamily. As to quaternary structure, homodimer. Mn(2+) serves as cofactor.

It localises to the cytoplasm. The catalysed reaction is 3-methyl-2-oxobutanoate + acetyl-CoA + H2O = (2S)-2-isopropylmalate + CoA + H(+). It participates in amino-acid biosynthesis; L-leucine biosynthesis; L-leucine from 3-methyl-2-oxobutanoate: step 1/4. In terms of biological role, catalyzes the condensation of the acetyl group of acetyl-CoA with 3-methyl-2-oxobutanoate (2-ketoisovalerate) to form 3-carboxy-3-hydroxy-4-methylpentanoate (2-isopropylmalate). The protein is 2-isopropylmalate synthase of Tolumonas auensis (strain DSM 9187 / NBRC 110442 / TA 4).